A 118-amino-acid polypeptide reads, in one-letter code: Na(+)/H(+) antiporter subunit G1 (118 aa).

The next 3 helical transmembrane spans lie at 9 to 29 (VSIIFVVLGALISAFAATGLI), 47 to 67 (LGAMFLLFGAFLYFIGTEGYV), and 69 to 89 (MQLIIGIIFVFITGPLSSHLI).

Belongs to the CPA3 antiporters (TC 2.A.63) subunit G family. As to quaternary structure, may form a heterooligomeric complex that consists of seven subunits: mnhA1, mnhB1, mnhC1, mnhD1, mnhE1, mnhF1 and mnhG1.

Its subcellular location is the cell membrane. Functionally, mnh complex is a Na(+)/H(+) antiporter involved in Na(+) excretion. The chain is Na(+)/H(+) antiporter subunit G1 (mnhG1) from Staphylococcus epidermidis (strain ATCC 35984 / DSM 28319 / BCRC 17069 / CCUG 31568 / BM 3577 / RP62A).